Here is a 629-residue protein sequence, read N- to C-terminus: Putrebactin synthase (629 aa).

The protein belongs to the IucA/IucC family. In terms of assembly, homodimer.

The catalysed reaction is 2 N-(3-carboxypropanoyl)-N-hydroxyputrescine + 2 ATP = putrebactin + 2 AMP + 2 diphosphate + 2 H(+). It catalyses the reaction 2 N-(3-carboxypropanoyl)-N-hydroxyputrescine + ATP = pre-putrebactin + AMP + diphosphate + H(+). It carries out the reaction pre-putrebactin + ATP = putrebactin + AMP + diphosphate + H(+). Its pathway is siderophore biosynthesis. With respect to regulation, requires Mg(2+) for activity. Ligase involved in the biosynthesis of the siderophore putrebactin. Catalyzes the ATP-dependent head-to-tail dimerization of N-hydroxy-N-succinyl-putrescine (HSP) to give pre-putrebactin and subsequent macrocyclization of pre-putrebactin to give putrebactin. This is Putrebactin synthase from Shewanella sp. (strain MR-4).